The following is a 335-amino-acid chain: Cathepsin B (335 aa).

The N-terminal stretch at 1–17 is a signal peptide; the sequence is MWRLLATLSCLLVLTSA. Positions 18-79 are cleaved as a propeptide — activation peptide; it reads RSSLYFPPLS…QRDAFAADVV (62 aa). Cystine bridges form between Cys93/Cys122, Cys105/Cys150, Cys141/Cys207, Cys142/Cys146, Cys179/Cys211, and Cys187/Cys198. Cys108 is an active-site residue. Residue Asn192 is glycosylated (N-linked (GlcNAc...) asparagine). Lys220 is subject to N6-acetyllysine. Cysteines 227 and 331 form a disulfide. Catalysis depends on residues His278 and Asn298. A propeptide spanning residues 333–335 is cleaved from the precursor; the sequence is HQY.

The protein belongs to the peptidase C1 family. As to quaternary structure, dimer of a heavy chain and a light chain cross-linked by a disulfide bond. Interacts with SRPX2. Directly interacts with SHKBP1. As to expression, expressed in myoblasts, the myotube, fibroblasts and fetal muscle (at protein level). Expressed in the spleen (at protein level).

The protein localises to the lysosome. It is found in the melanosome. The protein resides in the secreted. It localises to the extracellular space. Its subcellular location is the apical cell membrane. The enzyme catalyses Hydrolysis of proteins with broad specificity for peptide bonds. Preferentially cleaves -Arg-Arg-|-Xaa bonds in small molecule substrates (thus differing from cathepsin L). In addition to being an endopeptidase, shows peptidyl-dipeptidase activity, liberating C-terminal dipeptides.. Its function is as follows. Thiol protease which is believed to participate in intracellular degradation and turnover of proteins. Cleaves matrix extracellular phosphoglycoprotein MEPE. Involved in the solubilization of cross-linked TG/thyroglobulin in the thyroid follicle lumen. Has also been implicated in tumor invasion and metastasis. This chain is Cathepsin B (CTSB), found in Bos taurus (Bovine).